Here is a 461-residue protein sequence, read N- to C-terminus: Transcription factor phm6 (461 aa).

The segment at residues 18 to 50 is a DNA-binding region (zn(2)-C6 fungal-type); that stretch reads CNRCRNHKLKCVVTEAPNGTACCQRCIRAMVPC. 2 disordered regions span residues 55–79 and 256–278; these read RERK…PWET and LQTD…VGAT. The span at 256 to 274 shows a compositional bias: low complexity; it reads LQTDDSSSTQSESSRSRAS.

Its subcellular location is the nucleus. Its function is as follows. Transcription factor that regulates the expression of the gene cluster that mediates the biosynthesis of the trans-fused decalin-containing tetramic acid phomasetin. This is Transcription factor phm6 from Pyrenochaetopsis sp.